The sequence spans 213 residues: mRNA-decapping protein OPG121 (213 aa).

Glu-16 and Arg-50 together coordinate N(7)-methyl-GTP. A Nudix hydrolase domain is found at 30-209; the sequence is KDTHVFAACI…EYLSYIYNML (180 aa). The Nudix box signature appears at 111-132; the sequence is GKLDKKESIKDCLRRELKEESD. 5 residues coordinate Mg(2+): Glu-117, Glu-126, Glu-130, Asp-151, and Glu-183. Catalysis depends on Glu-126, which acts as the Nucleophile. N(7)-methyl-GTP is bound at residue Asp-151.

This sequence belongs to the Nudix hydrolase family. Requires Mg(2+) as cofactor. The cofactor is Mn(2+).

It carries out the reaction a 5'-end (N(7)-methyl 5'-triphosphoguanosine)-guanosine in mRNA + H2O = a 5'-end phospho-guanosine in mRNA + N(7)-methyl-GDP + 2 H(+). Functionally, decapping enzyme that remove the protective 5'-cap from both host and viral mRNAs to commit transcripts for decay by the cellular exonuclease XRN1. Accelerates viral and cellular mRNA turnover to eliminate competing host mRNAs and allow stage-specific synthesis of viral proteins. Acceleration of the turnover of cellular transcripts may even promote the shutoff of host protein synthesis. This chain is mRNA-decapping protein OPG121 (OPG121), found in Homo sapiens (Human).